Here is an 88-residue protein sequence, read N- to C-terminus: UPF0297 protein SPCG_0205 (88 aa).

Belongs to the UPF0297 family.

This chain is UPF0297 protein SPCG_0205, found in Streptococcus pneumoniae (strain CGSP14).